Reading from the N-terminus, the 448-residue chain is Phosphoglucosamine mutase (448 aa).

Ser-100 functions as the Phosphoserine intermediate in the catalytic mechanism. Residues Ser-100, Asp-240, Asp-242, and Asp-244 each contribute to the Mg(2+) site. Position 100 is a phosphoserine (Ser-100).

This sequence belongs to the phosphohexose mutase family. It depends on Mg(2+) as a cofactor. Activated by phosphorylation.

It catalyses the reaction alpha-D-glucosamine 1-phosphate = D-glucosamine 6-phosphate. Catalyzes the conversion of glucosamine-6-phosphate to glucosamine-1-phosphate. This Geobacillus thermodenitrificans (strain NG80-2) protein is Phosphoglucosamine mutase.